The primary structure comprises 673 residues: UvrABC system protein B (673 aa).

The Helicase ATP-binding domain occupies 26 to 414 (EGLEDGLAHQ…GGDVVDQVVR (389 aa)). 39–46 (GVTGSGKT) is an ATP binding site. Positions 92 to 115 (YYDYYQPEAYVPSSDTFIEKDASV) match the Beta-hairpin motif. The Helicase C-terminal domain occupies 431-597 (QVDDLLSEIR…GLNKKVVDIL (167 aa)). One can recognise a UVR domain in the interval 633-668 (QQKIHELEGLMMQHAQNLEFEEAAQIRDQLHQLREL).

It belongs to the UvrB family. As to quaternary structure, forms a heterotetramer with UvrA during the search for lesions. Interacts with UvrC in an incision complex.

The protein resides in the cytoplasm. Its function is as follows. The UvrABC repair system catalyzes the recognition and processing of DNA lesions. A damage recognition complex composed of 2 UvrA and 2 UvrB subunits scans DNA for abnormalities. Upon binding of the UvrA(2)B(2) complex to a putative damaged site, the DNA wraps around one UvrB monomer. DNA wrap is dependent on ATP binding by UvrB and probably causes local melting of the DNA helix, facilitating insertion of UvrB beta-hairpin between the DNA strands. Then UvrB probes one DNA strand for the presence of a lesion. If a lesion is found the UvrA subunits dissociate and the UvrB-DNA preincision complex is formed. This complex is subsequently bound by UvrC and the second UvrB is released. If no lesion is found, the DNA wraps around the other UvrB subunit that will check the other stand for damage. The sequence is that of UvrABC system protein B from Shigella flexneri.